Reading from the N-terminus, the 243-residue chain is UPF0758 protein PCC7424_2073 (243 aa).

The MPN domain maps to 112 to 235 (VEINDPVSAV…HQSLRTVTDL (124 aa)). Zn(2+) is bound by residues H184, H186, and D197. The short motif at 184–197 (HNHPSGNVAPSQED) is the JAMM motif element.

Belongs to the UPF0758 family.

The polypeptide is UPF0758 protein PCC7424_2073 (Gloeothece citriformis (strain PCC 7424) (Cyanothece sp. (strain PCC 7424))).